The following is a 208-amino-acid chain: Putative proteasome subunit alpha type-4-B (208 aa).

Belongs to the peptidase T1A family. As to quaternary structure, component of the 20S core complex of the 26S proteasome. The 26S proteasome is composed of a core protease (CP), known as the 20S proteasome, capped at one or both ends by the 19S regulatory particle (RP/PA700). The 20S proteasome core is composed of 28 subunits that are arranged in four stacked rings, resulting in a barrel-shaped structure. The two end rings are each formed by seven alpha subunits, and the two central rings are each formed by seven beta subunits. The catalytic chamber with the active sites is on the inside of the barrel.

The protein resides in the cytoplasm. Its subcellular location is the nucleus. Functionally, the proteasome is a multicatalytic proteinase complex which is characterized by its ability to cleave peptides with Arg, Phe, Tyr, Leu, and Glu adjacent to the leaving group at neutral or slightly basic pH. The proteasome has an ATP-dependent proteolytic activity. This Arabidopsis thaliana (Mouse-ear cress) protein is Putative proteasome subunit alpha type-4-B (PAC2).